The sequence spans 772 residues: Larval serum protein 1 gamma chain (772 aa).

An N-terminal signal peptide occupies residues 1–16; it reads MKLTLVILALVACVTA. The N-linked (GlcNAc...) asparagine glycan is linked to N242.

The protein belongs to the hemocyanin family. In terms of assembly, heterohexamer, composed of three subunits, alpha, beta and gamma. As to expression, larval hemolymph.

It localises to the secreted. It is found in the extracellular space. Larval storage protein (LSP) which may serve as a store of amino acids for synthesis of adult proteins. This chain is Larval serum protein 1 gamma chain (Lsp1gamma), found in Drosophila melanogaster (Fruit fly).